The chain runs to 528 residues: UDP-glucuronosyltransferase 2A2 (528 aa).

The signal sequence occupies residues 1-21 (MIKKVLQLLIFHLTLAEIVLS). The Extracellular segment spans residues 22–494 (GNVVVWPTDG…FQYHSLDVIG (473 aa)). N-linked (GlcNAc...) asparagine glycans are attached at residues N48 and N314. Residues 495-515 (FLLACVASAILLVAKCCLFIF) traverse the membrane as a helical segment. Topologically, residues 516 to 528 (QKVGKTGKKKKRD) are cytoplasmic.

This sequence belongs to the UDP-glycosyltransferase family.

The protein resides in the membrane. The enzyme catalyses glucuronate acceptor + UDP-alpha-D-glucuronate = acceptor beta-D-glucuronoside + UDP + H(+). It catalyses the reaction 17alpha-estradiol + UDP-alpha-D-glucuronate = 17alpha-estradiol 3-O-(beta-D-glucuronate) + UDP + H(+). It carries out the reaction 17beta-estradiol + UDP-alpha-D-glucuronate = 17beta-estradiol 3-O-(beta-D-glucuronate) + UDP + H(+). The catalysed reaction is chenodeoxycholate + UDP-alpha-D-glucuronate = chenodeoxycholoyl-24-O-(beta-D-glucuronate) + UDP. The enzyme catalyses lithocholate + UDP-alpha-D-glucuronate = lithocholoyl-24-O-(beta-D-glucuronate) + UDP. It catalyses the reaction deoxycholate + UDP-alpha-D-glucuronate = deoxycholoyl-24-O-(beta-D-glucuronate) + UDP. It carries out the reaction hyocholate + UDP-alpha-D-glucuronate = hyocholoyl-24-O-(beta-D-glucuronate) + UDP. The catalysed reaction is hyodeoxycholate + UDP-alpha-D-glucuronate = hyodeoxycholate 6-O-(beta-D-glucuronate) + UDP + H(+). Functionally, UDP-glucuronosyltransferase (UGT) that catalyzes phase II biotransformation reactions in which lipophilic substrates are conjugated with glucuronic acid to increase the metabolite's water solubility, thereby facilitating excretion into either the urine or bile. Essential for the elimination and detoxification of drugs, xenobiotics and endogenous compounds. Catalyzes the glucuronidation of endogenous estrogen hormone estradiol. Contributes to bile acid (BA) detoxification by catalyzing the glucuronidation of BA substrates, which are natural detergents for dietary lipids absorption. Potential role in detoxification of toxic waste compounds in the amniotic fluid before birth, and air-born chemical after birth. In Mus musculus (Mouse), this protein is UDP-glucuronosyltransferase 2A2.